A 294-amino-acid chain; its full sequence is ATP synthase gamma chain (294 aa).

The protein belongs to the ATPase gamma chain family. In terms of assembly, F-type ATPases have 2 components, CF(1) - the catalytic core - and CF(0) - the membrane proton channel. CF(1) has five subunits: alpha(3), beta(3), gamma(1), delta(1), epsilon(1). CF(0) has three main subunits: a, b and c.

It is found in the cell membrane. Produces ATP from ADP in the presence of a proton gradient across the membrane. The gamma chain is believed to be important in regulating ATPase activity and the flow of protons through the CF(0) complex. The polypeptide is ATP synthase gamma chain (Ruminiclostridium cellulolyticum (strain ATCC 35319 / DSM 5812 / JCM 6584 / H10) (Clostridium cellulolyticum)).